Here is a 475-residue protein sequence, read N- to C-terminus: Gelsolin-like protein 1 (475 aa).

The interval 1–131 is actin binding, actin severing, Ca-sensitive; the sequence is MGGTSLDPAL…GYRHVDDQFK (131 aa). The interval 1–239 is necessary for barbed end capping activity; the sequence is MGGTSLDPAL…VRKVSKGKDD (239 aa). Residues 27-105 form a Gelsolin-like 1 repeat; that stretch reads FVLEPVPEVD…IQNYESPLFL (79 aa). Residues 70-73 form an actin-actin interfilament contact point region; the sequence is DEIG. The tract at residues 106-147 is required for synapse elimination during development; that stretch reads SYFPDGIRYVSGGYESGYRHVDDQFKNWKPHLFHCKGKRNVR. Residues 133–227 are required for phosphatidylinositol 4,5-bisphosphate binding and regulation; it reads WKPHLFHCKG…STFWSYFGGV (95 aa). Gelsolin-like repeat units follow at residues 148–208, 275–341, and 375–447; these read CTEV…KVHI, RKEQ…STQF, and EIAN…PPTF. Positions 240–475 are F- and G-actin binding, Ca-independent; that stretch reads DDNYWKRLTE…VQNMRRLLFH (236 aa). The inhibitory for phosphatidylinositol 4,5-bisphosphate binding activity stretch occupies residues 248-348; the sequence is TEQITLWKVS…TQFTQWFRDW (101 aa).

It belongs to the villin/gelsolin family. Monomer. Binds to actin monomers and filaments. Cleavage by caspase ced-3 activates its actin-severing function and is required for the elimination of presynaptic components during development.

It is found in the cytoplasm. It localises to the cytoskeleton. In terms of biological role, calcium-regulated, actin-modulating protein that binds to the plus (or barbed) ends of actin monomers or filaments, preventing monomer exchange (end-blocking or capping). Binds actin but does not nucleate actin polymerization, albeit slows down elongation by blocking the barbed ends. By promoting actin depolymerization, required for the elimination of presynaptic components downstream of the egl-1, ced-4 and ced-3 apoptotic pathway during larval development. In Caenorhabditis elegans, this protein is Gelsolin-like protein 1.